A 217-amino-acid chain; its full sequence is Adenylate kinase (217 aa).

Residue 10–15 (GAGKGT) coordinates ATP. An NMP region spans residues 30–59 (STGDMLRAAVKAGTPLGLEAKKVMDSGGLV). AMP is bound by residues threonine 31, arginine 36, 57–59 (GLV), 85–88 (GFPR), and glutamine 92. Residues 122–159 (GRRVHVASGRTYHVKFNPPKVAGVDDVTGEPLIQRDDD) are LID. Residues arginine 123 and 132–133 (TY) contribute to the ATP site. Positions 156 and 167 each coordinate AMP. Position 203 (glycine 203) interacts with ATP.

It belongs to the adenylate kinase family. As to quaternary structure, monomer.

The protein resides in the cytoplasm. It catalyses the reaction AMP + ATP = 2 ADP. It participates in purine metabolism; AMP biosynthesis via salvage pathway; AMP from ADP: step 1/1. Its function is as follows. Catalyzes the reversible transfer of the terminal phosphate group between ATP and AMP. Plays an important role in cellular energy homeostasis and in adenine nucleotide metabolism. This Methylibium petroleiphilum (strain ATCC BAA-1232 / LMG 22953 / PM1) protein is Adenylate kinase.